Here is a 336-residue protein sequence, read N- to C-terminus: UPF0324 membrane protein BR0028/BS1330_I0028 (336 aa).

Transmembrane regions (helical) follow at residues 9–26 (ILPGLGLSVAITAAAMVL), 36–55 (RAWLEALVIAILLGTAVRSL), 68–90 (FSAKLLLEIAVALLGASISASAV), 94–116 (GSGLIFGIAAVVAVAITLSYGIG), 128–150 (LVACGNSICGNSAIAAMAPVIGA), 160–182 (AFTAILGVIVVLTLPLLVPLLGL), 189–211 (ILAGLTVYAVPQVLAATAPVSLL), 221–240 (LVRVLMLGPVILVFALISGN), 247–269 (PGFFQLVPWFIIGFLAMMALHSL), 279–301 (AIQYASMLLTIISMAALGLGVDI), and 313–335 (LTAILSLIALCCISLGLIHMLGV).

It belongs to the UPF0324 family.

The protein resides in the cell membrane. This Brucella suis biovar 1 (strain 1330) protein is UPF0324 membrane protein BR0028/BS1330_I0028.